The following is a 346-amino-acid chain: Methionine import ATP-binding protein MetN 1 (346 aa).

One can recognise an ABC transporter domain in the interval 2–241 (IELKNVSKVF…PQHVTTKKFV (240 aa)). 38-45 (GYSGAGKS) is a binding site for ATP.

The protein belongs to the ABC transporter superfamily. Methionine importer (TC 3.A.1.24) family. As to quaternary structure, the complex is composed of two ATP-binding proteins (MetN), two transmembrane proteins (MetI) and a solute-binding protein (MetQ).

It localises to the cell membrane. The catalysed reaction is L-methionine(out) + ATP + H2O = L-methionine(in) + ADP + phosphate + H(+). It carries out the reaction D-methionine(out) + ATP + H2O = D-methionine(in) + ADP + phosphate + H(+). Functionally, part of the ABC transporter complex MetNIQ involved in methionine import. Responsible for energy coupling to the transport system. The chain is Methionine import ATP-binding protein MetN 1 from Bacillus cereus (strain ATCC 14579 / DSM 31 / CCUG 7414 / JCM 2152 / NBRC 15305 / NCIMB 9373 / NCTC 2599 / NRRL B-3711).